A 573-amino-acid chain; its full sequence is Putative ABC transporter ATP-binding protein LJ_1704 (573 aa).

ABC transporter domains lie at 6 to 247 (IEFK…GVRE) and 303 to 536 (LKLD…ASLK). ATP contacts are provided by residues 40-47 (GPSGSGKS) and 337-344 (GQNGAGKT).

It belongs to the ABC transporter superfamily.

The protein resides in the cell membrane. Probably part of an ABC transporter complex. Responsible for energy coupling to the transport system. The polypeptide is Putative ABC transporter ATP-binding protein LJ_1704 (Lactobacillus johnsonii (strain CNCM I-12250 / La1 / NCC 533)).